We begin with the raw amino-acid sequence, 299 residues long: GTP cyclohydrolase FolE2 (299 aa).

It belongs to the GTP cyclohydrolase IV family.

It carries out the reaction GTP + H2O = 7,8-dihydroneopterin 3'-triphosphate + formate + H(+). Its pathway is cofactor biosynthesis; 7,8-dihydroneopterin triphosphate biosynthesis; 7,8-dihydroneopterin triphosphate from GTP: step 1/1. In terms of biological role, converts GTP to 7,8-dihydroneopterin triphosphate. The sequence is that of GTP cyclohydrolase FolE2 from Citrobacter koseri (strain ATCC BAA-895 / CDC 4225-83 / SGSC4696).